The following is a 166-amino-acid chain: Keratin, type II cytoskeletal 68 kDa, component IB (166 aa).

Residues 1-41 (EAKDDLARLLRDYQDAMNVKLALDVEIATYRKLLEGEECRM) enclose the IF rod domain. Positions 1-41 (EAKDDLARLLRDYQDAMNVKLALDVEIATYRKLLEGEECRM) are coil 2B. Positions 42–166 (SGECPSAVSI…FSQSSQRTSR (125 aa)) are tail. The segment covering 122-146 (GFGGGSSGFGSGSGGRSGVSGGGLS) has biased composition (gly residues). The segment at 122–166 (GFGGGSSGFGSGSGGRSGVSGGGLSSGSSRGGSVRFSQSSQRTSR) is disordered. Low complexity predominate over residues 147–166 (SGSSRGGSVRFSQSSQRTSR).

It belongs to the intermediate filament family. Heterotetramer of two type I and two type II keratins.

The chain is Keratin, type II cytoskeletal 68 kDa, component IB from Bos taurus (Bovine).